A 158-amino-acid polypeptide reads, in one-letter code: Snaclec mucrocetin subunit alpha (158 aa).

The first 23 residues, 1–23, serve as a signal peptide directing secretion; sequence MGRFIFVSFGLLVVFLSLSGTGA. Intrachain disulfides connect cysteine 27-cysteine 38, cysteine 55-cysteine 152, and cysteine 127-cysteine 144. Residues 34–153 enclose the C-type lectin domain; that stretch reads YDRYCYQAFS…CGRENPFVCK (120 aa).

This sequence belongs to the snaclec family. As to quaternary structure, tetramer of heterodimers of alpha and beta subunits (alphabeta)(4); disulfide-linked. As to expression, expressed by the venom gland.

The protein resides in the secreted. In terms of biological role, platelet-agglutinating factor that acts in a vWF-independent manner. Binds specifically to platelet GPIbalpha (GP1BA) to a distinct binding site from that of flavocetin-A. The sequence is that of Snaclec mucrocetin subunit alpha from Protobothrops mucrosquamatus (Taiwan habu).